Here is a 1050-residue protein sequence, read N- to C-terminus: Antibiotic efflux pump membrane transporter ArpB (1050 aa).

The next 12 helical transmembrane spans lie at 10–30 (IFAW…ILKL), 339–359 (GVIH…YLFL), 370–390 (MTVP…GFSI), 393–413 (LTMF…IVVV), 440–460 (GALV…AFFG), 472–492 (ITIV…TPAL), 539–559 (VPFL…FARI), 871–891 (MPAL…ALYE), 893–913 (WSIP…ALIA), 923–943 (VYFL…AILI), 972–992 (IIMT…ASGA), and 1004–1024 (VIGG…LFFV).

The protein belongs to the resistance-nodulation-cell division (RND) (TC 2.A.6) family.

It is found in the cell inner membrane. In terms of biological role, the inner membrane transporter component of an antibiotic efflux pump. Confers resistance to numerous structurally unrelated antibiotics such as carbenicillin, chloramphenicol, erythromycin, novobiocin, streptomycin and tetracycline. Is not involved in organic solvent efflux. The protein is Antibiotic efflux pump membrane transporter ArpB (arpB) of Pseudomonas putida (Arthrobacter siderocapsulatus).